A 432-amino-acid chain; its full sequence is Adenylosuccinate synthetase (432 aa).

GTP-binding positions include 13–19 and 41–43; these read GDEGKGK and GHT. The active-site Proton acceptor is the Asp14. Mg(2+) is bound by residues Asp14 and Gly41. IMP is bound by residues 14-17, 39-42, Thr131, Arg145, Gln226, Thr241, and Arg305; these read DEGK and NAGH. The active-site Proton donor is the His42. 301–307 contacts substrate; it reads SVTGRAR. Residues Arg307, 333-335, and 416-418 each bind GTP; these read KLD and STG.

Belongs to the adenylosuccinate synthetase family. Homodimer. It depends on Mg(2+) as a cofactor.

It localises to the cytoplasm. The catalysed reaction is IMP + L-aspartate + GTP = N(6)-(1,2-dicarboxyethyl)-AMP + GDP + phosphate + 2 H(+). The protein operates within purine metabolism; AMP biosynthesis via de novo pathway; AMP from IMP: step 1/2. Plays an important role in the de novo pathway of purine nucleotide biosynthesis. Catalyzes the first committed step in the biosynthesis of AMP from IMP. This chain is Adenylosuccinate synthetase, found in Neisseria gonorrhoeae (strain ATCC 700825 / FA 1090).